The chain runs to 252 residues: MSGHSKWATTKHKKAVIDARRGKLFAKLIKNIEVAARTGGGDPAGNPTLYDAIQKAKKTSVPNDNIDRAVKRGAGLEAGGADYQTIMYEGYAPGGVAVLVECLTDNRNRAASDVRVAFTRNGGSLADPGSVSYLFSRRGVVVVPKTDGLDEDDVLGAVLDAGAEEVNDLGEAFEVLSEATDLVAVRTALQDAGLDYDSAEAQFVPATQIEVDVDGARKVLRLIDALEDSDDVQNVFANFDATDEVLAQLDED.

The protein belongs to the TACO1 family.

The protein localises to the cytoplasm. This chain is Probable transcriptional regulatory protein Bcav_1989, found in Beutenbergia cavernae (strain ATCC BAA-8 / DSM 12333 / CCUG 43141 / JCM 11478 / NBRC 16432 / NCIMB 13614 / HKI 0122).